The sequence spans 792 residues: Phenylalanine--tRNA ligase beta subunit (792 aa).

One can recognise a tRNA-binding domain in the interval 39–147 (ARTLEKVVVG…ADAPIGKNIQ (109 aa)). In terms of domain architecture, B5 spans 400-475 (PKIPRIILRP…HLYGYDRIPQ (76 aa)). Residues D453, D459, E462, and E463 each coordinate Mg(2+). One can recognise an FDX-ACB domain in the interval 697-791 (SKFPSIRRDI…LERKFNAKLR (95 aa)).

It belongs to the phenylalanyl-tRNA synthetase beta subunit family. Type 1 subfamily. Tetramer of two alpha and two beta subunits. The cofactor is Mg(2+).

The protein resides in the cytoplasm. The catalysed reaction is tRNA(Phe) + L-phenylalanine + ATP = L-phenylalanyl-tRNA(Phe) + AMP + diphosphate + H(+). This is Phenylalanine--tRNA ligase beta subunit from Coxiella burnetii (strain RSA 493 / Nine Mile phase I).